The primary structure comprises 263 residues: Alpha-tubulin N-acetyltransferase 2 (263 aa).

The 181-residue stretch at 1–181 (MEIAFDLSSI…NKYAVFPNFF (181 aa)) folds into the N-acetyltransferase domain. 115–128 (FFIVPTEQRSGNGF) provides a ligand contact to acetyl-CoA. Disordered regions lie at residues 191 to 224 (TPRQ…RPRH) and 236 to 263 (FPRG…EPIW). Over residues 200–212 (RASSAVSSHTTSR) the composition is skewed to low complexity. Positions 253-263 (LTRDQRHEPIW) are enriched in basic and acidic residues.

The protein belongs to the acetyltransferase ATAT1 family.

The enzyme catalyses L-lysyl-[alpha-tubulin] + acetyl-CoA = N(6)-acetyl-L-lysyl-[alpha-tubulin] + CoA + H(+). Functionally, specifically acetylates 'Lys-40' in alpha-tubulin/mec-12 on the lumenal side of microtubules. Promotes microtubule destabilization and accelerates microtubule dynamics; this activity may be independent of acetylation activity. Acetylates alpha-tubulin with a slow enzymatic rate, due to a catalytic site that is not optimized for acetyl transfer. Enters the microtubule through each end and diffuses quickly throughout the lumen of microtubules. Acetylates only long/old microtubules because of its slow acetylation rate since it does not have time to act on dynamically unstable microtubules before the enzyme is released. Required for the maintenance of touch receptor neurons and possibly other type of neurons involved in locomotion. In Caenorhabditis briggsae, this protein is Alpha-tubulin N-acetyltransferase 2 (atat-2).